Consider the following 582-residue polypeptide: Hydrogen peroxide stress regulator 1 (582 aa).

Disordered stretches follow at residues 24 to 55, 107 to 154, 347 to 366, and 375 to 422; these read SPFA…HNSS, YPSA…GISK, TSYN…SGET, and NTSG…GGKS. Residues 107-125 are compositionally biased toward polar residues; the sequence is YPSASFSTSQHPSQVYNDG. Positions 126-143 are enriched in low complexity; that stretch reads STLNSNNTTQQLNNNNGF. Polar residues predominate over residues 375–392; the sequence is NTSGRSPNSMEATEQIGT. The C2H2-type 1 zinc-finger motif lies at 423-446; sequence FVCPECSKKFKRSEHLRRHIRSLH. The C2H2-type 2; atypical zinc-finger motif lies at 452–473; the sequence is FVCICGKRFSRRDNLRQHERLH.

It localises to the nucleus. In terms of biological role, transcription factor that globally supports gene expression in response to hydrogen peroxide. The polypeptide is Hydrogen peroxide stress regulator 1 (hsr1) (Schizosaccharomyces pombe (strain 972 / ATCC 24843) (Fission yeast)).